Consider the following 357-residue polypeptide: Peptide chain release factor 1 (357 aa).

Position 236 is an N5-methylglutamine (glutamine 236).

It belongs to the prokaryotic/mitochondrial release factor family. Methylated by PrmC. Methylation increases the termination efficiency of RF1.

Its subcellular location is the cytoplasm. In terms of biological role, peptide chain release factor 1 directs the termination of translation in response to the peptide chain termination codons UAG and UAA. This is Peptide chain release factor 1 from Mycobacterium avium (strain 104).